A 530-amino-acid chain; its full sequence is Bifunctional purine biosynthesis protein PurH (530 aa).

Residues 1–148 (MNNARPIHRA…KNHKDVAIVV (148 aa)) form the MGS-like domain.

It belongs to the PurH family.

It catalyses the reaction (6R)-10-formyltetrahydrofolate + 5-amino-1-(5-phospho-beta-D-ribosyl)imidazole-4-carboxamide = 5-formamido-1-(5-phospho-D-ribosyl)imidazole-4-carboxamide + (6S)-5,6,7,8-tetrahydrofolate. The catalysed reaction is IMP + H2O = 5-formamido-1-(5-phospho-D-ribosyl)imidazole-4-carboxamide. It participates in purine metabolism; IMP biosynthesis via de novo pathway; 5-formamido-1-(5-phospho-D-ribosyl)imidazole-4-carboxamide from 5-amino-1-(5-phospho-D-ribosyl)imidazole-4-carboxamide (10-formyl THF route): step 1/1. Its pathway is purine metabolism; IMP biosynthesis via de novo pathway; IMP from 5-formamido-1-(5-phospho-D-ribosyl)imidazole-4-carboxamide: step 1/1. The sequence is that of Bifunctional purine biosynthesis protein PurH from Vibrio cholerae serotype O1 (strain ATCC 39541 / Classical Ogawa 395 / O395).